The chain runs to 393 residues: Na(+)/H(+) antiporter NhaA (393 aa).

11 consecutive transmembrane segments (helical) span residues 24-44 (GGLV…SPLA), 58-78 (LSLL…LVGL), 96-116 (ILPG…YILF), 126-146 (GWAI…SLFG), 155-175 (IFLA…IALF), 178-198 (SDLN…LYGM), 214-234 (AVLW…GVLL), 267-287 (VAFI…FSGV), 300-320 (VAAG…FLLV), 338-358 (GVAA…LLAF), and 369-389 (MGIL…LATF).

Belongs to the NhaA Na(+)/H(+) (TC 2.A.33) antiporter family.

It is found in the cell inner membrane. The catalysed reaction is Na(+)(in) + 2 H(+)(out) = Na(+)(out) + 2 H(+)(in). Na(+)/H(+) antiporter that extrudes sodium in exchange for external protons. The polypeptide is Na(+)/H(+) antiporter NhaA (Rhizobium etli (strain ATCC 51251 / DSM 11541 / JCM 21823 / NBRC 15573 / CFN 42)).